We begin with the raw amino-acid sequence, 61 residues long: Small ribosomal subunit protein uS14 (61 aa).

Zn(2+) contacts are provided by cysteine 24, cysteine 27, cysteine 40, and cysteine 43.

This sequence belongs to the universal ribosomal protein uS14 family. Zinc-binding uS14 subfamily. In terms of assembly, part of the 30S ribosomal subunit. Contacts proteins S3 and S10. It depends on Zn(2+) as a cofactor.

In terms of biological role, binds 16S rRNA, required for the assembly of 30S particles and may also be responsible for determining the conformation of the 16S rRNA at the A site. The chain is Small ribosomal subunit protein uS14 from Clostridium novyi (strain NT).